A 398-amino-acid chain; its full sequence is MKFEQSHVLKELPKQFFASLVQKVNRKLAEGHDVINLGQGNPDQPTPEHIVEEMKRAVADPENHKYSSFRGSYRLKSAAAAFYKREYGIDLDPETEVAVLFGGKAGLVELPQCLLNPGDTILVPDPGYPDYWSGVTLAKAKMEMMPLVKDRAFLPDYSSITAEIREQAKLMYLNYPNNPTGAVATSEFFEDTVRFAAENGICVVHDFAYGAVGFDGCKPLSFLQTEGAKDIGIEIYTLSKTYNMAGWRVGFAVGNASVIEAINLYQDHMFVSLFRATQEAAAEALLADQTCVAEQNARYESRRNAWITACREIGWDVTAPAGSFFAWLPVPEGYTSEQFSDLLLEKANVAVAAGNGFGEYGEGYVRVGLLTSEERLKEAAYRIGKLNLFTQKSIDKTL.

Lys-240 is modified (N6-(pyridoxal phosphate)lysine).

It belongs to the class-I pyridoxal-phosphate-dependent aminotransferase family. MtnE subfamily. Pyridoxal 5'-phosphate is required as a cofactor.

It carries out the reaction 4-methylsulfanyl-2-oxobutanoate + L-glutamine = 2-oxoglutaramate + L-methionine. It functions in the pathway amino-acid biosynthesis; L-methionine biosynthesis via salvage pathway; L-methionine from S-methyl-5-thio-alpha-D-ribose 1-phosphate: step 6/6. Functionally, involved in the methylthioribose (MTR) recycling pathway. Catalyzes the formation of methionine from 2-keto-4-methylthiobutyrate (KMTB). This is L-glutamine--4-(methylsulfanyl)-2-oxobutanoate aminotransferase from Bacillus subtilis (strain 168).